A 346-amino-acid polypeptide reads, in one-letter code: Leucine zipper protein 2 (346 aa).

A signal peptide spans 1–17 (MKFIGAVYLLFLLPALS). N-linked (GlcNAc...) asparagine glycans are attached at residues N19 and N131. Residues 41–209 (RHLSKTSKEL…QLKALKDTVH (169 aa)) adopt a coiled-coil conformation. The interval 162-190 (LRYGKKDLIFKGQQLMDLENKLKVAKDEL) is leucine-zipper. N-linked (GlcNAc...) asparagine glycans are attached at residues N241 and N296. Residues 271–346 (SAVMRRESTG…LKKTQSDKHN (76 aa)) form a disordered region. Polar residues predominate over residues 293–324 (CSHNQTESSSVMKKTFGHSQSKTPEQNGQGQA). Over residues 326–346 (TAEESVKTDGELKKTQSDKHN) the composition is skewed to basic and acidic residues.

The protein resides in the secreted. In Danio rerio (Zebrafish), this protein is Leucine zipper protein 2 (luzp2).